Here is a 190-residue protein sequence, read N- to C-terminus: Elongation factor P-like protein (190 aa).

The protein belongs to the elongation factor P family.

This is Elongation factor P-like protein from Yersinia pestis bv. Antiqua (strain Antiqua).